We begin with the raw amino-acid sequence, 343 residues long: Olfactory receptor 6K6 (343 aa).

Topologically, residues 1–53 (MKQYSVGNQHSNYRSLLFPFLCSQMTQLTASGNQTMVTEFLFSMFPHAHRGGL) are extracellular. An N-linked (GlcNAc...) asparagine glycan is attached at N33. The chain crosses the membrane as a helical span at residues 54-74 (LFFIPLLLIYGFILTGNLIMF). Topologically, residues 75-82 (IVIQVGMA) are cytoplasmic. A helical transmembrane segment spans residues 83 to 103 (LHTPLYFFISVLSFLEICYTT). Topologically, residues 104–127 (TTIPKMLSCLISEQKSISVAGCLL) are extracellular. C125 and C217 are joined by a disulfide. The helical transmembrane segment at 128-148 (QMYFFHSLGITESCVLTAMAI) threads the bilayer. The Cytoplasmic portion of the chain corresponds to 149–167 (DRYIAICNPLRYPTIMIPK). The helical transmembrane segment at 168 to 188 (LCIQLTVGSCFCGFLLVLPEI) threads the bilayer. The Extracellular portion of the chain corresponds to 189 to 224 (AWISTLPFCGSNQIHQIFCDFTPVLSLACTDTFLVV). The helical transmembrane segment at 225–244 (IVDAIHAAEIVASFLVIALS) threads the bilayer. Residues 245–264 (YIRIIIVILGMHSAEGHHKA) are Cytoplasmic-facing. A helical transmembrane segment spans residues 265–285 (FSTCAAHLAVFLLFFGSVAVM). Over 286–298 (YLRFSATYSVFWD) the chain is Extracellular. Residues 299–319 (TAIAVTFVILAPFFNPIIYSL) traverse the membrane as a helical segment. Topologically, residues 320–343 (KNKDMKEAIGRLFHYQKRAGWAGK) are cytoplasmic.

It belongs to the G-protein coupled receptor 1 family.

It is found in the cell membrane. In terms of biological role, odorant receptor. This is Olfactory receptor 6K6 (OR6K6) from Homo sapiens (Human).